A 105-amino-acid chain; its full sequence is Large ribosomal subunit protein uL24 (105 aa).

This sequence belongs to the universal ribosomal protein uL24 family. As to quaternary structure, part of the 50S ribosomal subunit.

Its function is as follows. One of two assembly initiator proteins, it binds directly to the 5'-end of the 23S rRNA, where it nucleates assembly of the 50S subunit. One of the proteins that surrounds the polypeptide exit tunnel on the outside of the subunit. The chain is Large ribosomal subunit protein uL24 from Rhodospirillum centenum (strain ATCC 51521 / SW).